A 767-amino-acid polypeptide reads, in one-letter code: AMP deaminase 3 (767 aa).

Phosphoserine occurs at positions 85 and 107. Disordered regions lie at residues 89–111 (QMPP…PTTP) and 181–205 (LGHP…PLPQ). 2 residues coordinate Zn(2+): H317 and H319. Residues H319 and 388-393 (KFNSKY) each bind substrate. H586 is a binding site for Zn(2+). E589 lines the substrate pocket. The Proton acceptor role is filled by H608. Position 663 (D663) interacts with Zn(2+). 664–667 (DPMQ) is a binding site for substrate.

The protein belongs to the metallo-dependent hydrolases superfamily. Adenosine and AMP deaminases family. Homotetramer. Zn(2+) serves as cofactor.

It catalyses the reaction AMP + H2O + H(+) = IMP + NH4(+). It participates in purine metabolism; IMP biosynthesis via salvage pathway; IMP from AMP: step 1/1. Its function is as follows. AMP deaminase plays a critical role in energy metabolism. The protein is AMP deaminase 3 of Homo sapiens (Human).